Here is a 73-residue protein sequence, read N- to C-terminus: Disintegrin cerastin (73 aa).

In terms of domain architecture, Disintegrin spans 1 to 73 (EAGEECDCGT…ADCPRNGLYG (73 aa)). Cystine bridges form between C6–C21, C8–C16, C15–C38, C29–C35, C34–C59, and C47–C66. The Cell attachment site motif lies at 51-53 (RGD).

The protein belongs to the venom metalloproteinase (M12B) family. P-II subfamily. P-IIa sub-subfamily. In terms of assembly, monomer (disintegrin). Expressed by the venom gland.

The protein localises to the secreted. Functionally, inhibits fibrinogen interaction with platelets. Acts by binding to alpha-IIb/beta-3 (ITGA2B/ITGB3) on the platelet surface and inhibits aggregation induced by ADP, thrombin, platelet-activating factor and collagen. The sequence is that of Disintegrin cerastin from Crotalus cerastes cerastes (Mojave desert sidewinder).